A 58-amino-acid polypeptide reads, in one-letter code: DNA-binding protein (58 aa).

Composition is skewed to basic residues over residues 1 to 19 (MVRR…RSRS) and 28 to 58 (SRYR…NQYI). Residues 1 to 58 (MVRRRRSRSPYRRRSRSRSRSGSDRSRSRYRSRSRSRSRSRSRARSRSPYHHHINQYI) form a disordered region.

In terms of processing, probably phosphorylated in infected cells.

It localises to the virion. Thought to be responsible for DNA condensation during packaging of the nucleocapsids. This chain is DNA-binding protein (P7.3), found in Cryptophlebia leucotreta granulosis virus (ClGV).